The sequence spans 499 residues: MVVEEQSLENGGSVHVVKGESNFRNVVCGPVRWLKMLSSELHWSFVFGVVSLYGINQGLGGSLGRVATEYYMKDVQKVQPSESQALTAITKIPWIIKPLWGILTDVLPIFGFHRRPYFILAGVLGVVSLLFISLHSNLHLYLALFWMTISSAAMAIADVTIDACTAYNSIKHPSLASDMQSLCSLSSSIGALLGFFMSGILVHLVGSKGVFGLLTFPFALVSVVGIVFSEPHVPGFSYKQVNQKFTDAGKAMWRTMKCSDVWRPSLYMYISLTLGLNIHEGLFYWFTDSKDGPLFAQETVGFILSIGSIGSILAATLYQLVLKDHPFRGLCLWTQLLFALSGMLDLILVFRLNLKFGLPDYLFIVVDEIVSQMIGRLKWMPLLVLTSKLCPHGIEGTFFALLMSIDNAGLMTSSWLGGIMLHVLKVTRTEFGNLWLAVLVRNVMRLLPLCFLFLVPKGDQNTFKLPDEIMGEDSDEEKDEKEGTRNLELASLVHSVDRR.

Helical transmembrane passes span W43 to L63, I92 to F112, P116 to S136, Y141 to I161, L185 to V205, G209 to S229, L266 to F286, F302 to L322, L330 to F350, L354 to I374, F399 to I419, and W435 to V455.

This sequence belongs to the major facilitator superfamily. Folate-biopterin transporter (TC 2.A.71) family.

The protein localises to the membrane. Functionally, could mediate folate transport. This chain is Probable folate-biopterin transporter 2, found in Arabidopsis thaliana (Mouse-ear cress).